Here is a 215-residue protein sequence, read N- to C-terminus: Ubiquitin-conjugating enzyme E2 S (215 aa).

The UBC core domain occupies 9–155; the sequence is DVIKRVVKEL…AKLFTSIHAS (147 aa). Residue cysteine 93 is the Glycyl thioester intermediate of the active site. The tract at residues 159–215 is disordered; that stretch reads IDSNNNNENSTTTPTTTTTATTPSTNTASISSPVKKKTETTNSTTTKVQPKKSLKRL. The segment covering 161 to 190 has biased composition (low complexity); it reads SNNNNENSTTTPTTTTTATTPSTNTASISS.

Belongs to the ubiquitin-conjugating enzyme family.

The catalysed reaction is S-ubiquitinyl-[E1 ubiquitin-activating enzyme]-L-cysteine + [E2 ubiquitin-conjugating enzyme]-L-cysteine = [E1 ubiquitin-activating enzyme]-L-cysteine + S-ubiquitinyl-[E2 ubiquitin-conjugating enzyme]-L-cysteine.. The protein operates within protein modification; protein ubiquitination. In terms of biological role, catalyzes the covalent attachment of ubiquitin to other proteins. Acts as an essential factor of the anaphase promoting complex/cyclosome (APC/C), a cell cycle-regulated ubiquitin ligase that controls progression through mitosis. Acts by specifically elongating polyubiquitin chains initiated by the E2 enzyme ubch10 on APC/C substrates, enhancing the degradation of APC/C substrates by the proteasome and promoting mitotic exit. This chain is Ubiquitin-conjugating enzyme E2 S (ube2s), found in Dictyostelium discoideum (Social amoeba).